Reading from the N-terminus, the 410-residue chain is LL-diaminopimelate aminotransferase (410 aa).

Substrate contacts are provided by Y15 and G42. Residues Y72, 108 to 109 (SK), Y132, N187, Y218, and 246 to 248 (SFS) each bind pyridoxal 5'-phosphate. Substrate-binding residues include K109, Y132, and N187. K249 is subject to N6-(pyridoxal phosphate)lysine. Residues R257 and N292 each coordinate pyridoxal 5'-phosphate. Substrate contacts are provided by N292 and R388.

This sequence belongs to the class-I pyridoxal-phosphate-dependent aminotransferase family. LL-diaminopimelate aminotransferase subfamily. Homodimer. Pyridoxal 5'-phosphate serves as cofactor.

It carries out the reaction (2S,6S)-2,6-diaminopimelate + 2-oxoglutarate = (S)-2,3,4,5-tetrahydrodipicolinate + L-glutamate + H2O + H(+). It participates in amino-acid biosynthesis; L-lysine biosynthesis via DAP pathway; LL-2,6-diaminopimelate from (S)-tetrahydrodipicolinate (aminotransferase route): step 1/1. In terms of biological role, involved in the synthesis of meso-diaminopimelate (m-DAP or DL-DAP), required for both lysine and peptidoglycan biosynthesis. Catalyzes the direct conversion of tetrahydrodipicolinate to LL-diaminopimelate. This is LL-diaminopimelate aminotransferase from Geobacter sulfurreducens (strain ATCC 51573 / DSM 12127 / PCA).